Reading from the N-terminus, the 1252-residue chain is Guanine nucleotide exchange factor SDC25 (1252 aa).

Residues 26–97 (QPIDVVECTY…PPSFTRSILN (72 aa)) form the SH3 domain. Disordered stretches follow at residues 409–454 (IPAS…DTIW) and 623–648 (LNLD…DEYE). The span at 416–428 (TSCSSETSHHSPS) shows a compositional bias: low complexity. Positions 782-914 (SNNRIKGGSK…LLKEVNQKFK (133 aa)) constitute an N-terminal Ras-GEF domain. The Ras-GEF domain maps to 952 to 1199 (DPVLFATQLT…YQLSLIIEPK (248 aa)). Residues 1201-1252 (RKKVVPNSNSNNKSQEKSRDDQTDEGKTSTKKDRFSKFQLHKTKKKAPKVSK) are disordered. Residues 1214 to 1236 (SQEKSRDDQTDEGKTSTKKDRFS) show a composition bias toward basic and acidic residues. Over residues 1239–1252 (QLHKTKKKAPKVSK) the composition is skewed to basic residues.

Promotes the exchange of Ras-bound GDP by GTP. This chain is Guanine nucleotide exchange factor SDC25 (SDC25), found in Saccharomyces cerevisiae (strain YJM789) (Baker's yeast).